A 68-amino-acid chain; its full sequence is Conotoxin ArMMSK-01 (68 aa).

The N-terminal stretch at 1-20 is a signal peptide; the sequence is MMSKLGVLLTICMLLFPLTA. The propeptide occupies 21–51; that stretch reads LPLDGDQPADRPAERMQDDFISEQHPLFNPI. 3 cysteine pairs are disulfide-bonded: C54–C67, C55–C63, and C59–C66. P65 carries the post-translational modification 4-hydroxyproline.

Belongs to the conotoxin M superfamily. Expressed by the venom duct.

It localises to the secreted. The chain is Conotoxin ArMMSK-01 from Conus arenatus (Sand-dusted cone).